The primary structure comprises 91 residues: PqqA binding protein (91 aa).

The protein belongs to the PqqD family. As to quaternary structure, monomer. Interacts with PqqE.

It participates in cofactor biosynthesis; pyrroloquinoline quinone biosynthesis. In terms of biological role, functions as a PqqA binding protein and presents PqqA to PqqE, in the pyrroloquinoline quinone (PQQ) biosynthetic pathway. The polypeptide is PqqA binding protein (Pseudomonas fluorescens (strain ATCC BAA-477 / NRRL B-23932 / Pf-5)).